The primary structure comprises 143 residues: MSEEKQWTEVFHAIDKDKNGFLTREEIAQCLKEVGVCPNVADKIIKETDMNSDGKISLEEYLNALRKLPPREKCVARWREVFQSIDKDGSGKVSIKELDEFLKTSGMDIDQNSLRNWMTQNDKNKDGELDYDEFLAYVRQTYK.

EF-hand domains are found at residues 2-37 (SEEKQWTEVFHAIDKDKNGFLTREEIAQCLKEVGVC), 41-71 (ADKIIKETDMNSDGKISLEEYLNALRKLPPR), 73-108 (KCVARWREVFQSIDKDGSGKVSIKELDEFLKTSGMD), and 109-143 (IDQNSLRNWMTQNDKNKDGELDYDEFLAYVRQTYK). Residues aspartate 15, aspartate 17, asparagine 19, glutamate 26, aspartate 49, asparagine 51, aspartate 53, lysine 55, glutamate 60, aspartate 86, aspartate 88, serine 90, lysine 92, glutamate 97, aspartate 122, asparagine 124, aspartate 126, glutamate 128, and glutamate 133 each contribute to the Ca(2+) site.

In terms of tissue distribution, found in eggs.

Calcium-binding protein. The protein is 16 kDa calcium-binding protein of Schistosoma mansoni (Blood fluke).